A 209-amino-acid chain; its full sequence is 3-demethoxyubiquinol 3-hydroxylase (209 aa).

Positions 58, 88, 91, 140, 172, and 175 each coordinate Fe cation.

It belongs to the COQ7 family. Fe cation serves as cofactor.

It localises to the cell membrane. The catalysed reaction is a 5-methoxy-2-methyl-3-(all-trans-polyprenyl)benzene-1,4-diol + AH2 + O2 = a 3-demethylubiquinol + A + H2O. It participates in cofactor biosynthesis; ubiquinone biosynthesis. Catalyzes the hydroxylation of 2-nonaprenyl-3-methyl-6-methoxy-1,4-benzoquinol during ubiquinone biosynthesis. This is 3-demethoxyubiquinol 3-hydroxylase from Polaromonas sp. (strain JS666 / ATCC BAA-500).